The chain runs to 337 residues: Putative 2-aminoethylphosphonate-binding periplasmic protein (337 aa).

Positions 1–21 are cleaved as a signal peptide; the sequence is MKLSRLALLSVFALASAPSWA.

The protein belongs to the bacterial solute-binding protein 1 family.

It is found in the periplasm. Probably part of the PhnSTUV complex (TC 3.A.1.11.5) involved in 2-aminoethylphosphonate import. This Salmonella typhimurium (strain LT2 / SGSC1412 / ATCC 700720) protein is Putative 2-aminoethylphosphonate-binding periplasmic protein (phnS).